The following is an 88-amino-acid chain: Large ribosomal subunit protein bL27 (88 aa).

Residues 1–21 are disordered; the sequence is MAHKKGASSSRNGRDSAAHRL.

The protein belongs to the bacterial ribosomal protein bL27 family.

This chain is Large ribosomal subunit protein bL27, found in Mycobacterium ulcerans (strain Agy99).